Reading from the N-terminus, the 56-residue chain is Lantibiotic subtilin (56 aa).

The propeptide occupies 1-24 (MSKFDDFDLDVVKVSKQDSKITPQ). The residue at position 25 (Trp25) is an N2-succinyltryptophan; partial. Residues 27–31 (SESLC) constitute a cross-link (lanthionine (Ser-Cys)). Ser29 is modified (2,3-didehydroalanine (Ser)). 4 consecutive cross-links (beta-methyllanthionine (Thr-Cys)) follow at residues 32-35 (TPGC), 37-43 (TGALQTC), 47-50 (TLTC), and 49-52 (TCNC). Position 42 is a (Z)-2,3-didehydrobutyrine (Thr42). A 2,3-didehydroalanine (Ser) modification is found at Ser55.

It belongs to the type A lantibiotic family. Post-translationally, maturation of lantibiotics involves the enzymatic conversion of Thr, and Ser into dehydrated AA and the formation of thioether bonds with cysteine. This is followed by membrane translocation and cleavage of the modified precursor. Succinylated subtilin is 10-20 times less active than subtilin. The ratio subtilin/succinylated subtilin is about 1:2 after 24 hours growth. In terms of processing, the 2,3-didehydrobutyrine is determined to be the Z-isomer.

Its function is as follows. Lanthionine-containing peptide antibiotic (lantibiotic) active on Gram-positive bacteria. The bactericidal activity of lantibiotics is based on depolarization of energized bacterial cytoplasmic membranes, initiated by the formation of aqueous transmembrane pores. This chain is Lantibiotic subtilin (spaS), found in Bacillus subtilis.